The following is a 474-amino-acid chain: ABHD16B (474 aa).

One can recognise an AB hydrolase-1 domain in the interval 175 to 295; that stretch reads VICCEGNAGF…QSWKGLVVRT (121 aa). Residues S248, D323, and H423 each act as charge relay system in the active site.

Belongs to the AB hydrolase superfamily. ABHD16 family. As to expression, expressed in most tissues, with highest expression found in the testes, skeletal muscle, and brown adipose tissue.

It carries out the reaction a 1,2-diacyl-sn-glycero-3-phospho-L-serine + H2O = a 2-acyl-sn-glycero-3-phospho-L-serine + a fatty acid + H(+). The enzyme catalyses a 1-acylglycerol + H2O = glycerol + a fatty acid + H(+). It catalyses the reaction 1-(9Z-octadecenoyl)-glycerol + H2O = glycerol + (9Z)-octadecenoate + H(+). Its function is as follows. Hydrolyzes the sn-1 position of glycerophospholipids with high specificity towards phosphatidylserine (PS), PS-PLA1 enzyme. Also hydrolyzes the acyl chain of glycerolipids with a preference for the monoacylglycerol (MAG) 1-acylglycerol, MAG lipase. Plays a regulatory role in cellular lipid homeostasis by modulating genes involved in neutral lipid degradation and in phospholipid synthesis and composition. This Mus musculus (Mouse) protein is ABHD16B.